The following is a 279-amino-acid chain: Topoisomerase I damage affected protein 4 (279 aa).

Topologically, residues 1–32 are extracellular; that stretch reads MNANSTTTAIGLTSPFEKLSFFPHSSNLILAH. A helical transmembrane segment spans residues 33 to 53; sequence LHEIIFSFVFYQLAFSVVAPF. Residues 54 to 79 lie on the Cytoplasmic side of the membrane; the sequence is LNKVVFRKHYTTIRDPLLKIDFNVHT. The 202-residue stretch at 70 to 271 folds into the TLC domain; sequence LLKIDFNVHT…MIRIAKKLAK (202 aa). A helical transmembrane segment spans residues 80–100; it reads VSMIQAVVSNTVLLPTLTTPM. Topologically, residues 101–110 are extracellular; the sequence is HYNVVTYTDS. The chain crosses the membrane as a helical span at residues 111–131; sequence YSSMVSSLSAGYFIWDLTMCV. The Cytoplasmic portion of the chain corresponds to 132-135; sequence RYFK. The helical transmembrane segment at 136 to 156 threads the bilayer; the sequence is LYGLEFTGHAIGSVYVMLLSL. At 157–162 the chain is on the extracellular side; it reads RPFCQP. Residues 163–183 traverse the membrane as a helical segment; sequence WIGRFLIYEASTPFVNINWFI. The Cytoplasmic segment spans residues 184–192; sequence MQCNAKSKN. Residues 193–213 form a helical membrane-spanning segment; sequence SIPLWFNVVNGLLLMTVFFVV. Over 214–238 the chain is Extracellular; that stretch reads RICWGSIASALLFRQMWKVRDELPK. The chain crosses the membrane as a helical span at residues 239 to 259; sequence FSAVTMMSLNIFMNLLNVLWF. Topologically, residues 260-279 are cytoplasmic; sequence KKMIRIAKKLAKPAPTSKLD.

It belongs to the TMEM56 family.

The protein resides in the membrane. In Saccharomyces cerevisiae (strain ATCC 204508 / S288c) (Baker's yeast), this protein is Topoisomerase I damage affected protein 4 (TDA4).